The following is a 100-amino-acid chain: Urease subunit gamma (100 aa).

It belongs to the urease gamma subunit family. In terms of assembly, heterotrimer of UreA (gamma), UreB (beta) and UreC (alpha) subunits. Three heterotrimers associate to form the active enzyme.

The protein resides in the cytoplasm. It catalyses the reaction urea + 2 H2O + H(+) = hydrogencarbonate + 2 NH4(+). It functions in the pathway nitrogen metabolism; urea degradation; CO(2) and NH(3) from urea (urease route): step 1/1. This Mycolicibacterium smegmatis (strain ATCC 700084 / mc(2)155) (Mycobacterium smegmatis) protein is Urease subunit gamma.